Reading from the N-terminus, the 415-residue chain is Esterase FrsA (415 aa).

This sequence belongs to the FrsA family.

The catalysed reaction is a carboxylic ester + H2O = an alcohol + a carboxylate + H(+). In terms of biological role, catalyzes the hydrolysis of esters. In Yersinia pseudotuberculosis serotype O:1b (strain IP 31758), this protein is Esterase FrsA.